A 501-amino-acid polypeptide reads, in one-letter code: Probable cytosol aminopeptidase (501 aa).

Residues lysine 267 and aspartate 272 each coordinate Mn(2+). Lysine 279 is a catalytic residue. Residues aspartate 290, aspartate 349, and glutamate 351 each coordinate Mn(2+). The active site involves arginine 353.

It belongs to the peptidase M17 family. Mn(2+) serves as cofactor.

The protein resides in the cytoplasm. The catalysed reaction is Release of an N-terminal amino acid, Xaa-|-Yaa-, in which Xaa is preferably Leu, but may be other amino acids including Pro although not Arg or Lys, and Yaa may be Pro. Amino acid amides and methyl esters are also readily hydrolyzed, but rates on arylamides are exceedingly low.. It carries out the reaction Release of an N-terminal amino acid, preferentially leucine, but not glutamic or aspartic acids.. Functionally, presumably involved in the processing and regular turnover of intracellular proteins. Catalyzes the removal of unsubstituted N-terminal amino acids from various peptides. This Hamiltonella defensa subsp. Acyrthosiphon pisum (strain 5AT) protein is Probable cytosol aminopeptidase.